The chain runs to 216 residues: Serine acetyltransferase (216 aa).

The protein belongs to the transferase hexapeptide repeat family.

Its subcellular location is the cytoplasm. It catalyses the reaction L-serine + acetyl-CoA = O-acetyl-L-serine + CoA. The protein operates within amino-acid biosynthesis; L-cysteine biosynthesis; L-cysteine from L-serine: step 1/2. Its activity is regulated as follows. Inhibited by cysteine. Functionally, catalyzes the acetylation of serine by acetyl-CoA to produce O-acetylserine (OAS). This Bacillus licheniformis (strain ATCC 14580 / DSM 13 / JCM 2505 / CCUG 7422 / NBRC 12200 / NCIMB 9375 / NCTC 10341 / NRRL NRS-1264 / Gibson 46) protein is Serine acetyltransferase.